The sequence spans 424 residues: F-box protein At2g38590 (424 aa).

An F-box domain is found at 2–47 (TTMISNLPRVLIEEIFFRVPLKSLRAVRLTCKSWNTLSKSRSFRKL).

This chain is F-box protein At2g38590, found in Arabidopsis thaliana (Mouse-ear cress).